The following is an 81-amino-acid chain: U12-hexatoxin-Mg1a (81 aa).

Residues 1–24 (MKAPATIVILIMSLISVLWATADT) form the signal peptide. Residues 25 to 50 (EDGNLLFPIEDFIRKFDEYPVQPKER) constitute a propeptide that is removed on maturation. 3 disulfide bridges follow: Cys52–Cys66, Cys59–Cys71, and Cys65–Cys75. Pro78 carries the proline amide modification.

In terms of tissue distribution, expressed by the venom gland.

It is found in the secreted. Its function is as follows. Blocks voltage-gated sodium channels (Nav). Intracranial injection into mice causes lacrimation, slow breathing and death. Intrathorax injection into crickets causes death. In Macrothele gigas (Japanese funnel web spider), this protein is U12-hexatoxin-Mg1a.